Reading from the N-terminus, the 248-residue chain is Probable transcriptional regulatory protein Avi_3631 (248 aa).

It belongs to the TACO1 family.

It is found in the cytoplasm. This is Probable transcriptional regulatory protein Avi_3631 from Allorhizobium ampelinum (strain ATCC BAA-846 / DSM 112012 / S4) (Agrobacterium vitis (strain S4)).